A 1237-amino-acid polypeptide reads, in one-letter code: MTEISVKLPHEPYNIQVTVSSQEQVQDVRQSIVELPGTFQYTSFHLEHNGTRINDYIELSEVKDIQANSEVVLVEDPYTEKEARMHVIRIRELIGAAGDRVDNLHGICAGLSLHDSVAAGEQLTDTKEGERGVVRDHALVDYDMTAPPVLQTILPRAQPSLPKTVKAISLSPWNPPPYHLRQRGHLLYLQVTTNEGEQHQITSHVSGFFVNKSSNAKFDPFPRPAPKNYSAHSLLTLISMLSPSFDASFKALQESNNKKDLLTTFPFQNSIPKNPWLVPPTSSAVTAHQSDITRSQENCLIFGVDNSETLRDWNEEFQSTRELPRETVQDKVSRERLTSKLFADYNDAAARGAVLVAKGEIAPLNPTEGKDAQIFVYNNIFFSFGADGVGTFASEGGDEAARVAVGKDVVGAKAVNQLDIPGLFTPGTVVVDYLGKRLVGQSIVPGIFKQREPGEHQIDYGGVEGKEVVAEHKDFVPVFEKLSASLRVKKHPVWDKEGKRHDLEGSVETKGLLGTDGRKYVLDLYRITPLDVAWSEDAEGHEPYPHRMSVLRLELVELYWRYKMGQYVKAEVQKRKTAKREAEKTKAVEAQNEDKAELLSTSDPGEGENKAVASEQERVDISAFKLALNPDVFSGQVPQTDEEKEEWAQDEKEVRSACDHLISKVIPELIQDLHDGDVGFPMDGESLTQLLHKRGINVRYLGKLAKLSQAKGQRLLALTALLIQEMVSRSFKHIANRYLRYLPSPFTASCVSHLLNCFLGAEVNSNPRPEIDEELREIYPEGDFSFEKVTPTSLKGDIEKQIKIRFRFNLEPKWTSSLKHLQLLRDISIKLGLQIGAREFAFERSQIKSQEHSPEPSSTHSSQDERGKRKKKKGSNSDSPSRVAASPRPVVTFVPEDILNIVPLVKDASPRSALAEEALEAGRISIMQNQKEIGQELILESLSLHEQIYGILHPEVAKLYHQLSMLYYQTDEKEAAVELARKAVIVTERTMGVDSADTILSYLNLSLFEHASGNTHTALIYIRHALELWKIIYGSHHPDSITTMNNAAVMLQHLKKYPDSRKWFEASLTVCEGLFGRQSINTATILFQLAQALALDQDSKAAVNRMRDAYNIFLNELGPNDRNTKEAESWLEQLTQNAVSIAKHAKDIQARRLRRTNLSPRMTIGTKPQPQVGQNAPATTNGATSKSIGLDSRSIDELLKFIEGGGESRSPRSKQKKRAAASNPKLRGSKQSTVQTA.

In terms of domain architecture, Clu spans 291–535 (DITRSQENCL…RITPLDVAWS (245 aa)). Basic and acidic residues-rich tracts occupy residues 575–597 (RKTAKREAEKTKAVEAQNEDKAE) and 845–854 (SQIKSQEHSP). 2 disordered regions span residues 575–614 (RKTAKREAEKTKAVEAQNEDKAELLSTSDPGEGENKAVAS) and 845–886 (SQIK…VAAS). TPR repeat units lie at residues 957 to 990 (AKLYHQLSMLYYQTDEKEAAVELARKAVIVTERT), 999 to 1032 (ILSYLNLSLFEHASGNTHTALIYIRHALELWKII), and 1041 to 1074 (ITTMNNAAVMLQHLKKYPDSRKWFEASLTVCEGL). Disordered regions lie at residues 1152–1189 (RLRRTNLSPRMTIGTKPQPQVGQNAPATTNGATSKSIG) and 1201–1237 (FIEGGGESRSPRSKQKKRAAASNPKLRGSKQSTVQTA). A compositionally biased stretch (polar residues) spans 1156 to 1187 (TNLSPRMTIGTKPQPQVGQNAPATTNGATSKS).

It belongs to the CLU family. As to quaternary structure, may associate with the eukaryotic translation initiation factor 3 (eIF-3) complex.

The protein localises to the cytoplasm. Its function is as follows. mRNA-binding protein involved in proper cytoplasmic distribution of mitochondria. This is Clustered mitochondria protein homolog from Ajellomyces capsulatus (strain NAm1 / WU24) (Darling's disease fungus).